Reading from the N-terminus, the 167-residue chain is Pathogenesis-related protein PR-1 type (167 aa).

Positions 1–29 (MAHNHWCNLFSVALVCVVALVMVQYSVAQ) are cleaved as a signal peptide. Positions 36–155 (VDAHNAARSA…NGAWFITCNY (120 aa)) constitute an SCP domain. Intrachain disulfides connect cysteine 72/cysteine 144, cysteine 117/cysteine 123, and cysteine 139/cysteine 153.

The protein belongs to the CRISP family.

Its function is as follows. Probably involved in the defense reaction of plants against pathogens. This is Pathogenesis-related protein PR-1 type from Sambucus nigra (European elder).